The primary structure comprises 99 residues: NADH-ubiquinone oxidoreductase chain 4L (99 aa).

3 helical membrane-spanning segments follow: residues Met-4–Ser-24, Leu-29–Phe-49, and Phe-63–Ile-83.

The protein belongs to the complex I subunit 4L family.

It is found in the mitochondrion membrane. It carries out the reaction a ubiquinone + NADH + 5 H(+)(in) = a ubiquinol + NAD(+) + 4 H(+)(out). Functionally, core subunit of the mitochondrial membrane respiratory chain NADH dehydrogenase (Complex I) that is believed to belong to the minimal assembly required for catalysis. Complex I functions in the transfer of electrons from NADH to the respiratory chain. The immediate electron acceptor for the enzyme is believed to be ubiquinone. The sequence is that of NADH-ubiquinone oxidoreductase chain 4L (mt:ND4L) from Anopheles gambiae (African malaria mosquito).